Consider the following 305-residue polypeptide: Peroxisome assembly protein 26 (305 aa).

The interval 1–20 (MKSDSSTSAAPLRGLGGPLR) is disordered. The Cytoplasmic segment spans residues 1 to 246 (MKSDSSTSAA…RQLWDSAVSH (246 aa)). Residues 247–267 (FFSLPFKKSLLAALILCLLVV) form a helical; Signal-anchor for type II membrane protein membrane-spanning segment. Topologically, residues 268–305 (RFDPASPSSLHFLYKLAQLFRWIRKAAFSRLYQLRIRD) are peroxisomal matrix.

It belongs to the peroxin-26 family. Interacts (via its cytoplasmic domain) with PEX6; interaction is direct and is ATP-dependent. Interacts with PEX1; interaction is indirect and is mediated via interaction with PEX6. Widely expressed. Highly expressed in kidney, liver, brain and skeletal muscles. Expressed at intermediate level in pancreas, placenta and heart. Weakly expressed in lung.

The protein resides in the peroxisome membrane. Peroxisomal docking factor that anchors PEX1 and PEX6 to peroxisome membranes. PEX26 is therefore required for the formation of the PEX1-PEX6 AAA ATPase complex, a complex that mediates the extraction of the PEX5 receptor from peroxisomal membrane. The polypeptide is Peroxisome assembly protein 26 (Homo sapiens (Human)).